Consider the following 267-residue polypeptide: 3-methyl-2-oxobutanoate hydroxymethyltransferase (267 aa).

Mg(2+) contacts are provided by D46 and D85. 3-methyl-2-oxobutanoate contacts are provided by residues 46 to 47 (DS), D85, and K115. A Mg(2+)-binding site is contributed by E117. The active-site Proton acceptor is E184.

The protein belongs to the PanB family. As to quaternary structure, homodecamer; pentamer of dimers. Mg(2+) is required as a cofactor.

The protein localises to the cytoplasm. The catalysed reaction is 3-methyl-2-oxobutanoate + (6R)-5,10-methylene-5,6,7,8-tetrahydrofolate + H2O = 2-dehydropantoate + (6S)-5,6,7,8-tetrahydrofolate. Its pathway is cofactor biosynthesis; (R)-pantothenate biosynthesis; (R)-pantoate from 3-methyl-2-oxobutanoate: step 1/2. Its function is as follows. Catalyzes the reversible reaction in which hydroxymethyl group from 5,10-methylenetetrahydrofolate is transferred onto alpha-ketoisovalerate to form ketopantoate. This is 3-methyl-2-oxobutanoate hydroxymethyltransferase from Geobacter sulfurreducens (strain ATCC 51573 / DSM 12127 / PCA).